A 621-amino-acid chain; its full sequence is UvrABC system protein C (621 aa).

The GIY-YIG domain maps to 20 to 98 (TAPGVYRMYA…IKSLTPRYNV (79 aa)). The 36-residue stretch at 207-242 (DLLAEELIQAMQVASEHLEFEQAARLRDLLTSLRSM) folds into the UVR domain.

Belongs to the UvrC family. As to quaternary structure, interacts with UvrB in an incision complex.

It localises to the cytoplasm. Functionally, the UvrABC repair system catalyzes the recognition and processing of DNA lesions. UvrC both incises the 5' and 3' sides of the lesion. The N-terminal half is responsible for the 3' incision and the C-terminal half is responsible for the 5' incision. This is UvrABC system protein C from Xylella fastidiosa (strain M23).